We begin with the raw amino-acid sequence, 95 residues long: Aspartyl/glutamyl-tRNA(Asn/Gln) amidotransferase subunit C (95 aa).

It belongs to the GatC family. As to quaternary structure, heterotrimer of A, B and C subunits.

The catalysed reaction is L-glutamyl-tRNA(Gln) + L-glutamine + ATP + H2O = L-glutaminyl-tRNA(Gln) + L-glutamate + ADP + phosphate + H(+). It catalyses the reaction L-aspartyl-tRNA(Asn) + L-glutamine + ATP + H2O = L-asparaginyl-tRNA(Asn) + L-glutamate + ADP + phosphate + 2 H(+). Its function is as follows. Allows the formation of correctly charged Asn-tRNA(Asn) or Gln-tRNA(Gln) through the transamidation of misacylated Asp-tRNA(Asn) or Glu-tRNA(Gln) in organisms which lack either or both of asparaginyl-tRNA or glutaminyl-tRNA synthetases. The reaction takes place in the presence of glutamine and ATP through an activated phospho-Asp-tRNA(Asn) or phospho-Glu-tRNA(Gln). The polypeptide is Aspartyl/glutamyl-tRNA(Asn/Gln) amidotransferase subunit C (Nitrosospira multiformis (strain ATCC 25196 / NCIMB 11849 / C 71)).